The sequence spans 273 residues: Chaperone protein PsaB (273 aa).

Positions 1-31 are cleaved as a signal peptide; the sequence is MKNLFFSAYKKVFSYITSIVIFMVSLPYAYS. Residues Cys128 and Cys163 are joined by a disulfide bond.

Belongs to the periplasmic pilus chaperone family.

It is found in the periplasm. In terms of biological role, required for the biogenesis of the pH 6 antigen. This chain is Chaperone protein PsaB (psaB), found in Yersinia pestis.